The sequence spans 488 residues: Glycogen synthase (488 aa).

Arg-20 contacts ADP-alpha-D-glucose.

The protein belongs to the glycosyltransferase 1 family. Bacterial/plant glycogen synthase subfamily.

It catalyses the reaction [(1-&gt;4)-alpha-D-glucosyl](n) + ADP-alpha-D-glucose = [(1-&gt;4)-alpha-D-glucosyl](n+1) + ADP + H(+). The protein operates within glycan biosynthesis; glycogen biosynthesis. Functionally, synthesizes alpha-1,4-glucan chains using ADP-glucose. The polypeptide is Glycogen synthase (Chlorobaculum tepidum (strain ATCC 49652 / DSM 12025 / NBRC 103806 / TLS) (Chlorobium tepidum)).